A 165-amino-acid chain; its full sequence is uncharacterized protein (165 aa).

Residues 4–26 (FVIGTMIALAGLLVGGGVGSYFT) traverse the membrane as a helical segment.

It is found in the membrane. This is an uncharacterized protein from Aquifex aeolicus (strain VF5).